Consider the following 132-residue polypeptide: MVRPLKPSQIRRLVRRPGIRKHRNSLRYKMRIKQGDTVQVISGDDKGKIGEVLRVFPERNMVLVEGVNIVTYHRKPQREGESGRIETKEAPIPVCKVMAYSKKQEVASRIGYQITADGRKVRVLKKTGEILD.

Belongs to the universal ribosomal protein uL24 family. In terms of assembly, part of the 50S ribosomal subunit.

One of two assembly initiator proteins, it binds directly to the 5'-end of the 23S rRNA, where it nucleates assembly of the 50S subunit. In terms of biological role, one of the proteins that surrounds the polypeptide exit tunnel on the outside of the subunit. In Synechococcus sp. (strain JA-2-3B'a(2-13)) (Cyanobacteria bacterium Yellowstone B-Prime), this protein is Large ribosomal subunit protein uL24.